A 202-amino-acid chain; its full sequence is ATP-dependent Clp protease proteolytic subunit (202 aa).

Residue Ser-106 is the Nucleophile of the active site. His-131 is an active-site residue.

It belongs to the peptidase S14 family. As to quaternary structure, fourteen ClpP subunits assemble into 2 heptameric rings which stack back to back to give a disk-like structure with a central cavity, resembling the structure of eukaryotic proteasomes.

Its subcellular location is the cytoplasm. The enzyme catalyses Hydrolysis of proteins to small peptides in the presence of ATP and magnesium. alpha-casein is the usual test substrate. In the absence of ATP, only oligopeptides shorter than five residues are hydrolyzed (such as succinyl-Leu-Tyr-|-NHMec, and Leu-Tyr-Leu-|-Tyr-Trp, in which cleavage of the -Tyr-|-Leu- and -Tyr-|-Trp bonds also occurs).. Cleaves peptides in various proteins in a process that requires ATP hydrolysis. Has a chymotrypsin-like activity. Plays a major role in the degradation of misfolded proteins. The polypeptide is ATP-dependent Clp protease proteolytic subunit (Albidiferax ferrireducens (strain ATCC BAA-621 / DSM 15236 / T118) (Rhodoferax ferrireducens)).